The chain runs to 864 residues: Arf-GAP with GTPase, ANK repeat and PH domain-containing protein 1 (864 aa).

Residues 66-276 are small GTPase-like; that stretch reads SRSVPELKVG…QTSNGGGSLS (211 aa). In terms of domain architecture, GLD spans 67 to 241; it reads RSVPELKVGI…TRKKQQLSIG (175 aa). Residues 78-85, 122-126, and 178-181 contribute to the GTP site; these read GNLASGKS, IRDEG, and TQDA. 3 disordered regions span residues 266–343, 405–455, and 499–549; these read SQTS…IGSG, VPGK…QMAS, and TGLG…LSST. Positions 275–289 are enriched in low complexity; that stretch reads LSDYSSSVPSTPSTS. Basic and acidic residues predominate over residues 322 to 337; sequence KGSDPDKDKKGLESRA. The PH domain occupies 346-591; that stretch reads IPIKQGMLLK…WVQAIESQIL (246 aa). Residues 413–428 are compositionally biased toward polar residues; it reads ATSSCAPVASPKTNGL. Residues 507–517 are compositionally biased toward low complexity; sequence SSPSISSTTSP. The span at 527–537 shows a compositional bias: basic residues; it reads ANRKKHRRKKS. Residues 538-549 are compositionally biased toward polar residues; it reads TSNFKVDGLSST. One can recognise an Arf-GAP domain in the interval 612 to 732; it reads ALALQSIRNL…LFLSPLPCRD (121 aa). The C4-type zinc-finger motif lies at 627-650; that stretch reads CVDCDAQSPDWASLNLGALMCIEC. 2 ANK repeats span residues 771–800 and 804–833; these read DRRT…DVMA and HGNT…PDEQ. A compositionally biased stretch (low complexity) spans 845 to 854; the sequence is KNNRNNNSNA. The interval 845–864 is disordered; the sequence is KNNRNNNSNAGGSGLMPTLI.

It belongs to the centaurin gamma-like family. As to quaternary structure, homodimer. Interacts with several subunits of the AP-3 protein complex.

It localises to the cytoplasm. In terms of biological role, GTPase-activating protein. Directly and specifically regulates the adapter protein 3 (AP-3)-dependent trafficking of proteins in the endosomal-lysosomal system. This chain is Arf-GAP with GTPase, ANK repeat and PH domain-containing protein 1 (agap1), found in Xenopus laevis (African clawed frog).